We begin with the raw amino-acid sequence, 484 residues long: tRNA sulfurtransferase (484 aa).

Positions 63-167 (QGIRERLSCM…DQRLFVVHDQ (105 aa)) constitute a THUMP domain. ATP-binding positions include 185-186 (LM), Lys-267, Gly-289, and Gln-298. Cys-346 and Cys-457 are joined by a disulfide. Positions 405–483 (ALAGQVILDI…GHANVRVYRP (79 aa)) constitute a Rhodanese domain. The active-site Cysteine persulfide intermediate is the Cys-457.

Belongs to the ThiI family.

The protein resides in the cytoplasm. The enzyme catalyses [ThiI sulfur-carrier protein]-S-sulfanyl-L-cysteine + a uridine in tRNA + 2 reduced [2Fe-2S]-[ferredoxin] + ATP + H(+) = [ThiI sulfur-carrier protein]-L-cysteine + a 4-thiouridine in tRNA + 2 oxidized [2Fe-2S]-[ferredoxin] + AMP + diphosphate. It carries out the reaction [ThiS sulfur-carrier protein]-C-terminal Gly-Gly-AMP + S-sulfanyl-L-cysteinyl-[cysteine desulfurase] + AH2 = [ThiS sulfur-carrier protein]-C-terminal-Gly-aminoethanethioate + L-cysteinyl-[cysteine desulfurase] + A + AMP + 2 H(+). It functions in the pathway cofactor biosynthesis; thiamine diphosphate biosynthesis. Its function is as follows. Catalyzes the ATP-dependent transfer of a sulfur to tRNA to produce 4-thiouridine in position 8 of tRNAs, which functions as a near-UV photosensor. Also catalyzes the transfer of sulfur to the sulfur carrier protein ThiS, forming ThiS-thiocarboxylate. This is a step in the synthesis of thiazole, in the thiamine biosynthesis pathway. The sulfur is donated as persulfide by IscS. The chain is tRNA sulfurtransferase from Pseudomonas syringae pv. syringae (strain B728a).